A 141-amino-acid chain; its full sequence is Large ribosomal subunit protein uL11 (141 aa).

It belongs to the universal ribosomal protein uL11 family. In terms of assembly, part of the ribosomal stalk of the 50S ribosomal subunit. Interacts with L10 and the large rRNA to form the base of the stalk. L10 forms an elongated spine to which L12 dimers bind in a sequential fashion forming a multimeric L10(L12)X complex. In terms of processing, one or more lysine residues are methylated.

In terms of biological role, forms part of the ribosomal stalk which helps the ribosome interact with GTP-bound translation factors. This Opitutus terrae (strain DSM 11246 / JCM 15787 / PB90-1) protein is Large ribosomal subunit protein uL11.